We begin with the raw amino-acid sequence, 265 residues long: Catechol O-methyltransferase (265 aa).

Topologically, residues 1–2 are cytoplasmic; that stretch reads ML. The helical; Signal-anchor for type II membrane protein transmembrane segment at 3 to 19 threads the bilayer; sequence LAAVSLGLLLLAFLLLL. The Extracellular portion of the chain corresponds to 20–265; sequence RHLGWGLVAI…QGPGSSPVKS (246 aa). Residues V85, E107, S115, E133, I134, 160-163, S162, and D184 contribute to the S-adenosyl-L-methionine site; that span reads GASQ. Mg(2+) is bound at residue D184. K187 is a binding site for substrate. Residues D212 and N213 each coordinate Mg(2+). Substrate is bound by residues N213 and E242. S260, S261, and S265 each carry phosphoserine.

The protein belongs to the class I-like SAM-binding methyltransferase superfamily. Cation-dependent O-methyltransferase family. The cofactor is Mg(2+).

The protein localises to the cytoplasm. It localises to the cell membrane. The catalysed reaction is a catechol + S-adenosyl-L-methionine = a guaiacol + S-adenosyl-L-homocysteine + H(+). The enzyme catalyses 2-hydroxyestrone + S-adenosyl-L-methionine = 2-hydroxy-3-methoxy-estrone + S-adenosyl-L-homocysteine + H(+). It catalyses the reaction 4-hydroxyestrone + S-adenosyl-L-methionine = 4-methoxyestrone + S-adenosyl-L-homocysteine + H(+). It carries out the reaction 2-hydroxyestrone + S-adenosyl-L-methionine = 2-methoxyestrone + S-adenosyl-L-homocysteine + H(+). The catalysed reaction is 4-hydroxy-17beta-estradiol + S-adenosyl-L-methionine = 4-methoxy-17beta-estradiol + S-adenosyl-L-homocysteine + H(+). The enzyme catalyses 2-hydroxy-17beta-estradiol + S-adenosyl-L-methionine = 2-hydroxy-3-methoxy-17beta-estradiol + S-adenosyl-L-homocysteine + H(+). It catalyses the reaction 2-hydroxy-17beta-estradiol + S-adenosyl-L-methionine = 2-methoxy-17beta-estradiol + S-adenosyl-L-homocysteine + H(+). In terms of biological role, catalyzes the O-methylation, and thereby the inactivation, of catecholamine neurotransmitters and catechol hormones. Also shortens the biological half-lives of certain neuroactive drugs, like L-DOPA, alpha-methyl DOPA and isoproterenol. In Mus musculus (Mouse), this protein is Catechol O-methyltransferase.